A 338-amino-acid chain; its full sequence is tRNA N6-adenosine threonylcarbamoyltransferase (338 aa).

His-110 and His-114 together coordinate Fe cation. Substrate-binding positions include 132-136 (LLSGG), Asp-165, Gly-178, and Asn-274. Asp-298 is a Fe cation binding site.

Belongs to the KAE1 / TsaD family. Fe(2+) is required as a cofactor.

It localises to the cytoplasm. The catalysed reaction is L-threonylcarbamoyladenylate + adenosine(37) in tRNA = N(6)-L-threonylcarbamoyladenosine(37) in tRNA + AMP + H(+). Required for the formation of a threonylcarbamoyl group on adenosine at position 37 (t(6)A37) in tRNAs that read codons beginning with adenine. Is involved in the transfer of the threonylcarbamoyl moiety of threonylcarbamoyl-AMP (TC-AMP) to the N6 group of A37, together with TsaE and TsaB. TsaD likely plays a direct catalytic role in this reaction. The chain is tRNA N6-adenosine threonylcarbamoyltransferase from Borrelia garinii subsp. bavariensis (strain ATCC BAA-2496 / DSM 23469 / PBi) (Borreliella bavariensis).